Here is a 380-residue protein sequence, read N- to C-terminus: MLRALARPLERCLGSRASGDGLLWQSELRPHAGGDYSIAVVQANSRLEDQSQVFTSSSATYVGVYDGHGGPEASRFVNRHLFPYMHKFAREHGGLSVDVIKKAFKETEEEFCGMVKRSLPMKPQMATVGSCCLVGAISNDTLYVANLGDSRAVLGSVVSGVDSNKGAVAERLSTDHNVAVEEVRKEVKALNPDDSQIVLYTRGVWRIKGIIQVSRSIGDVYLKKPEYYRDPIFQRHGNPIPLRRPAMTAEPSIIVRKLKPQDLFLIFASDGLWEHLSDETAVEIVLKHPRTGIARRLVRAALEEAAKKREMRYGDIKKIAKGIRRHFHDDISVIVVYLDQNKTSSSNSKLVKQGGITAPPDIYSLHSDEAEQRRLLNVLY.

Positions 35 to 338 (DYSIAVVQAN…DDISVIVVYL (304 aa)) constitute a PPM-type phosphatase domain. Residues Asp-66, Gly-67, Asp-270, and Asp-329 each coordinate Mn(2+).

It belongs to the PP2C family. Mg(2+) serves as cofactor. Mn(2+) is required as a cofactor.

The enzyme catalyses O-phospho-L-seryl-[protein] + H2O = L-seryl-[protein] + phosphate. It carries out the reaction O-phospho-L-threonyl-[protein] + H2O = L-threonyl-[protein] + phosphate. In terms of biological role, may dephosphorylate and repress plasma membrane H(+)-ATPases (PM H(+)-ATPases, e.g. AHA1 and AHA2), thus influencing negatively plant growth and fitness. In Arabidopsis thaliana (Mouse-ear cress), this protein is Probable protein phosphatase 2C 63.